We begin with the raw amino-acid sequence, 431 residues long: CCA-adding enzyme (431 aa).

Residues S50 and K53 each coordinate ATP. Positions 50 and 53 each coordinate CTP. Mg(2+) is bound by residues D61, D63, and D112. 3 residues coordinate ATP: H135, K155, and Y164. CTP-binding residues include H135, K155, and Y164.

Belongs to the tRNA nucleotidyltransferase/poly(A) polymerase family. Archaeal CCA-adding enzyme subfamily. As to quaternary structure, homodimer. Requires Mg(2+) as cofactor.

The catalysed reaction is a tRNA precursor + 2 CTP + ATP = a tRNA with a 3' CCA end + 3 diphosphate. The enzyme catalyses a tRNA with a 3' CCA end + 2 CTP + ATP = a tRNA with a 3' CCACCA end + 3 diphosphate. In terms of biological role, catalyzes the addition and repair of the essential 3'-terminal CCA sequence in tRNAs without using a nucleic acid template. Adds these three nucleotides in the order of C, C, and A to the tRNA nucleotide-73, using CTP and ATP as substrates and producing inorganic pyrophosphate. tRNA 3'-terminal CCA addition is required both for tRNA processing and repair. Also involved in tRNA surveillance by mediating tandem CCA addition to generate a CCACCA at the 3' terminus of unstable tRNAs. While stable tRNAs receive only 3'-terminal CCA, unstable tRNAs are marked with CCACCA and rapidly degraded. The chain is CCA-adding enzyme from Thermoplasma acidophilum (strain ATCC 25905 / DSM 1728 / JCM 9062 / NBRC 15155 / AMRC-C165).